The following is a 209-amino-acid chain: 3-dehydroquinate dehydratase (209 aa).

Residues Ser-6, 25-27 (ELR), and Arg-55 each bind 3-dehydroquinate. The active-site Proton donor/acceptor is the His-109. The Schiff-base intermediate with substrate role is filled by Lys-134. 3-dehydroquinate-binding residues include Arg-172 and Gln-195.

Belongs to the type-I 3-dehydroquinase family. In terms of assembly, homodimer.

It carries out the reaction 3-dehydroquinate = 3-dehydroshikimate + H2O. It participates in metabolic intermediate biosynthesis; chorismate biosynthesis; chorismate from D-erythrose 4-phosphate and phosphoenolpyruvate: step 3/7. Functionally, involved in the third step of the chorismate pathway, which leads to the biosynthesis of aromatic amino acids. Catalyzes the cis-dehydration of 3-dehydroquinate (DHQ) and introduces the first double bond of the aromatic ring to yield 3-dehydroshikimate. The sequence is that of 3-dehydroquinate dehydratase from Methanoregula boonei (strain DSM 21154 / JCM 14090 / 6A8).